Reading from the N-terminus, the 176-residue chain is Inorganic pyrophosphatase (176 aa).

Residues lysine 31, arginine 45, and tyrosine 57 each contribute to the substrate site. The Mg(2+) site is built by aspartate 67, aspartate 72, and aspartate 104. Substrate is bound at residue tyrosine 142.

Belongs to the PPase family. As to quaternary structure, homohexamer. The cofactor is Mg(2+).

Its subcellular location is the cytoplasm. It carries out the reaction diphosphate + H2O = 2 phosphate + H(+). In terms of biological role, catalyzes the hydrolysis of inorganic pyrophosphate (PPi) forming two phosphate ions. The protein is Inorganic pyrophosphatase of Haemophilus influenzae (strain ATCC 51907 / DSM 11121 / KW20 / Rd).